A 222-amino-acid chain; its full sequence is GTP cyclohydrolase 1 (222 aa).

Positions 111, 114, and 182 each coordinate Zn(2+).

The protein belongs to the GTP cyclohydrolase I family. As to quaternary structure, toroid-shaped homodecamer, composed of two pentamers of five dimers.

The enzyme catalyses GTP + H2O = 7,8-dihydroneopterin 3'-triphosphate + formate + H(+). It participates in cofactor biosynthesis; 7,8-dihydroneopterin triphosphate biosynthesis; 7,8-dihydroneopterin triphosphate from GTP: step 1/1. The polypeptide is GTP cyclohydrolase 1 (Citrobacter koseri (strain ATCC BAA-895 / CDC 4225-83 / SGSC4696)).